A 161-amino-acid chain; its full sequence is Probable ubiquitin-conjugating enzyme E2 17 (161 aa).

The UBC core domain occupies 15–161 (IATNRLQKEF…TRWRFHDDKV (147 aa)). C99 serves as the catalytic Glycyl thioester intermediate.

It belongs to the ubiquitin-conjugating enzyme family.

It carries out the reaction S-ubiquitinyl-[E1 ubiquitin-activating enzyme]-L-cysteine + [E2 ubiquitin-conjugating enzyme]-L-cysteine = [E1 ubiquitin-activating enzyme]-L-cysteine + S-ubiquitinyl-[E2 ubiquitin-conjugating enzyme]-L-cysteine.. It functions in the pathway protein modification; protein ubiquitination. In terms of biological role, accepts the ubiquitin from the E1 complex and catalyzes its covalent attachment to other proteins. The polypeptide is Probable ubiquitin-conjugating enzyme E2 17 (UBC17) (Arabidopsis thaliana (Mouse-ear cress)).